Here is a 312-residue protein sequence, read N- to C-terminus: Olfactory receptor 6C76 (312 aa).

Topologically, residues 1–23 (MKNRTSVTDFILLGLTDNPQLQV) are extracellular. N3 carries an N-linked (GlcNAc...) asparagine glycan. Residues 24-44 (VIFSFLFLTYVLSVTGNLTII) form a helical membrane-spanning segment. The Cytoplasmic segment spans residues 45–57 (SLTLLDSHLKTPM). The helical transmembrane segment at 58–80 (YFFLRNFSLEISFTSVCNPRFLI) threads the bilayer. Topologically, residues 81 to 94 (SILTGDKSISYNAC) are extracellular. The cysteines at positions 94 and 176 are disulfide-linked. A helical transmembrane segment spans residues 95–115 (AAQLFFFIFLGSTEFFLLASM). Residues 116-142 (SYDCYVAICKPLHYTTIMSDRICYQLI) lie on the Cytoplasmic side of the membrane. The helical transmembrane segment at 143 to 163 (ISSWLAGFLVIFPPLAMGLQL) threads the bilayer. The Extracellular segment spans residues 164 to 195 (DFCDSNVIDHFTCDSAPLLQISCTDTSTLELM). A helical transmembrane segment spans residues 196–216 (SFILALFTLISTLILVILSYT). Residues 217–238 (YIIRTILRIPSAQQRKKAFSTC) lie on the Cytoplasmic side of the membrane. The helical transmembrane segment at 239–259 (SSHVIVVSISYGSCIFMYVKT) threads the bilayer. The Extracellular segment spans residues 260–267 (SAKEGVAL). Residues 268-288 (TKGVAILNTSVAPMLNPFIYT) form a helical membrane-spanning segment. Topologically, residues 289–312 (LRNQQVKQAFKDVLRKISHKKKKH) are cytoplasmic.

This sequence belongs to the G-protein coupled receptor 1 family.

Its subcellular location is the cell membrane. Functionally, odorant receptor. The sequence is that of Olfactory receptor 6C76 (OR6C76) from Homo sapiens (Human).